Here is a 322-residue protein sequence, read N- to C-terminus: Probable L-asparaginase (322 aa).

Residues 6–320 (PRLALIHTGG…EDIRRVFTQG (315 aa)) form the Asparaginase/glutaminase domain. The segment at 13–37 (TGGTIASRPSPDGRGLTPQTPPALP) is disordered. Thr-16 acts as the O-isoaspartyl threonine intermediate in catalysis. Substrate-binding positions include Ser-54 and 85-86 (TD).

Belongs to the asparaginase 1 family.

The protein resides in the cytoplasm. The enzyme catalyses L-asparagine + H2O = L-aspartate + NH4(+). This chain is Probable L-asparaginase (ansA), found in Deinococcus radiodurans (strain ATCC 13939 / DSM 20539 / JCM 16871 / CCUG 27074 / LMG 4051 / NBRC 15346 / NCIMB 9279 / VKM B-1422 / R1).